A 341-amino-acid chain; its full sequence is Thymidine kinase (341 aa).

19 to 26 (GAYGIGKT) serves as a coordination point for ATP. Catalysis depends on Glu-48, which acts as the Proton acceptor. Substrate-binding residues include Tyr-66 and Gln-90. An ATP-binding site is contributed by Arg-183. Arg-189 contacts substrate.

Belongs to the herpesviridae thymidine kinase family. As to quaternary structure, homodimer.

The enzyme catalyses thymidine + ATP = dTMP + ADP + H(+). In terms of biological role, catalyzes the transfer of the gamma-phospho group of ATP to thymidine to generate dTMP in the salvage pathway of pyrimidine synthesis. The dTMP serves as a substrate for DNA polymerase during viral DNA replication. Allows the virus to be reactivated and to grow in non-proliferative cells lacking a high concentration of phosphorylated nucleic acid precursors. This Varicella-zoster virus (strain Dumas) (HHV-3) protein is Thymidine kinase.